The sequence spans 200 residues: ATP synthase subunit s, mitochondrial (200 aa).

A mitochondrion-targeting transit peptide spans 1–25 (MMLFGKVSQQLCGIKKLPWSCDSRY). An N-terminal domain region spans residues 1 to 61 (MMLFGKVSQQ…SEWLLRCGAM (61 aa)). Residue G59 participates in Mg(2+) binding. LRR repeat units follow at residues 62–87 (VRYH…KYKI), 88–116 (QAID…KIRL), 117–141 (CKCH…KSIL), and 142–173 (EMEI…LSDL). T93 is a binding site for Mg(2+).

Belongs to the ATP synthase subunit s family. In terms of assembly, homotetramer. Associates with ATP synthase.

The protein localises to the mitochondrion. Its subcellular location is the mitochondrion inner membrane. Functionally, involved in regulation of mitochondrial membrane ATP synthase. Necessary for H(+) conduction of ATP synthase. Facilitates energy-driven catalysis of ATP synthesis by blocking a proton leak through an alternative proton exit pathway. The protein is ATP synthase subunit s, mitochondrial (DMAC2L) of Macaca fascicularis (Crab-eating macaque).